The chain runs to 165 residues: Crossover junction endodeoxyribonuclease RuvC (165 aa).

Catalysis depends on residues Asp-7, Glu-68, and His-142. The Mg(2+) site is built by Asp-7, Glu-68, and His-142.

The protein belongs to the RuvC family. In terms of assembly, homodimer which binds Holliday junction (HJ) DNA. The HJ becomes 2-fold symmetrical on binding to RuvC with unstacked arms; it has a different conformation from HJ DNA in complex with RuvA. In the full resolvosome a probable DNA-RuvA(4)-RuvB(12)-RuvC(2) complex forms which resolves the HJ. Mg(2+) serves as cofactor.

The protein resides in the cytoplasm. The enzyme catalyses Endonucleolytic cleavage at a junction such as a reciprocal single-stranded crossover between two homologous DNA duplexes (Holliday junction).. The RuvA-RuvB-RuvC complex processes Holliday junction (HJ) DNA during genetic recombination and DNA repair. Endonuclease that resolves HJ intermediates. Cleaves cruciform DNA by making single-stranded nicks across the HJ at symmetrical positions within the homologous arms, yielding a 5'-phosphate and a 3'-hydroxyl group; requires a central core of homology in the junction. The consensus cleavage sequence is 5'-(A/T)TT(C/G)-3'. Cleavage occurs on the 3'-side of the TT dinucleotide at the point of strand exchange. HJ branch migration catalyzed by RuvA-RuvB allows RuvC to scan DNA until it finds its consensus sequence, where it cleaves and resolves the cruciform DNA. In Anaplasma marginale (strain Florida), this protein is Crossover junction endodeoxyribonuclease RuvC.